The chain runs to 973 residues: E3 ubiquitin-protein ligase BRE1A (973 aa).

The segment at 1 to 37 (MSGIGNKRAAGEPGTSMPPEKKTAVEDSGTTVETIKL) is disordered. Lys21 is modified (N6-acetyllysine). Ser41 is subject to Phosphoserine. Residues 43 to 90 (TEELDIRTLQSKNRKLAEMLDQRQAIEDELREHIEKLERRQATDDASL) adopt a coiled-coil conformation. The segment at 128–153 (VVPEPEPDSDSNQERKDDRERGDGQE) is disordered. A phosphoserine mark is found at Ser136 and Ser138. A compositionally biased stretch (basic and acidic residues) spans 139 to 151 (NQERKDDRERGDG). Coiled coils occupy residues 168–378 (EEME…VKET) and 429–896 (SLHK…TTKK). Residues Lys348 and Lys510 each carry the N6-acetyllysine modification. The interval 507–620 (DLNKTRLRSG…GKHDDGRKKE (114 aa)) is disordered. A Phosphoserine modification is found at Ser522. Composition is skewed to basic and acidic residues over residues 527–544 (EDPKDEPTELKQDSEDLA) and 553–620 (SQED…RKKE). Phosphoserine is present on Ser560. The RING-type zinc-finger motif lies at 920-959 (CPCCNMRKKDAVLTKCFHVFCFECVKTRYDTRQRKCPKCN).

Belongs to the BRE1 family. As to quaternary structure, component of the RNF20/40 complex (also known as BRE1 complex) probably composed of 2 copies of RNF20/BRE1A and 2 copies of RNF40/BRE1B. Interacts with UBE2E1/UBCH6. Interacts with p53/TP53 and WAC. Interacts with PAF1; the interaction mediates the association of the PAF1 and RNF20/40 complexes which is a prerequsite for recruitment of UBE2A/B. Interacts with PA2G4. Interacts with FBXL19.

The protein resides in the nucleus. It catalyses the reaction S-ubiquitinyl-[E2 ubiquitin-conjugating enzyme]-L-cysteine + [acceptor protein]-L-lysine = [E2 ubiquitin-conjugating enzyme]-L-cysteine + N(6)-ubiquitinyl-[acceptor protein]-L-lysine.. It functions in the pathway protein modification; protein ubiquitination. Functionally, component of the RNF20/40 E3 ubiquitin-protein ligase complex that mediates monoubiquitination of 'Lys-120' of histone H2B (H2BK120ub1). H2BK120ub1 gives a specific tag for epigenetic transcriptional activation and is also prerequisite for histone H3 'Lys-4' and 'Lys-79' methylation (H3K4me and H3K79me, respectively). It thereby plays a central role in histone code and gene regulation. The RNF20/40 complex forms a H2B ubiquitin ligase complex in cooperation with the E2 enzyme UBE2A or UBE2B; reports about the cooperation with UBE2E1/UBCH are contradictory. Required for transcriptional activation of Hox genes. Recruited to the MDM2 promoter, probably by being recruited by p53/TP53, and thereby acts as a transcriptional coactivator. Mediates the polyubiquitination of PA2G4 leading to its proteasome-mediated degradation. This Mus musculus (Mouse) protein is E3 ubiquitin-protein ligase BRE1A (Rnf20).